A 278-amino-acid polypeptide reads, in one-letter code: Thiazole synthase (278 aa).

The active-site Schiff-base intermediate with DXP is Lys-109. 1-deoxy-D-xylulose 5-phosphate is bound by residues Gly-170, 197–198 (AG), and 219–220 (NT).

It belongs to the ThiG family. Homotetramer. Forms heterodimers with either ThiH or ThiS.

It localises to the cytoplasm. The enzyme catalyses [ThiS sulfur-carrier protein]-C-terminal-Gly-aminoethanethioate + 2-iminoacetate + 1-deoxy-D-xylulose 5-phosphate = [ThiS sulfur-carrier protein]-C-terminal Gly-Gly + 2-[(2R,5Z)-2-carboxy-4-methylthiazol-5(2H)-ylidene]ethyl phosphate + 2 H2O + H(+). Its pathway is cofactor biosynthesis; thiamine diphosphate biosynthesis. In terms of biological role, catalyzes the rearrangement of 1-deoxy-D-xylulose 5-phosphate (DXP) to produce the thiazole phosphate moiety of thiamine. Sulfur is provided by the thiocarboxylate moiety of the carrier protein ThiS. In vitro, sulfur can be provided by H(2)S. This chain is Thiazole synthase, found in Cupriavidus necator (strain ATCC 17699 / DSM 428 / KCTC 22496 / NCIMB 10442 / H16 / Stanier 337) (Ralstonia eutropha).